A 288-amino-acid polypeptide reads, in one-letter code: Dysbindin protein homolog (288 aa).

A coiled-coil region spans residues 147–239; that stretch reads AQLQNSSQVL…QRERQAVFDD (93 aa).

Belongs to the dysbindin family. In terms of assembly, component of the biogenesis of lysosome-related organelles complex-1 (BLOC-1) composed of Blos1, Blos2, Blos3, Blos4, Dysb, Muted, Pldn and Snapin. Interacts with Pldn and Snapin.

Component of the biogenesis of lysosome-related organelles complex-1 (BLOC-1) involved in pigment granule biogenesis and membrane trafficking in synapses. In response to high synaptic activity at neuromuscular junctions, stabilizes Pldn protein levels and, together with Pldn, plays a role in promoting efficient synaptic vesicle recycling and re-formation through early endosomes. This Drosophila melanogaster (Fruit fly) protein is Dysbindin protein homolog.